Reading from the N-terminus, the 562-residue chain is NAD-dependent malic enzyme (562 aa).

Tyr101 functions as the Proton donor in the catalytic mechanism. Residue Arg154 coordinates NAD(+). The active-site Proton acceptor is Lys172. A divalent metal cation-binding residues include Glu243, Asp244, and Asp267. NAD(+) contacts are provided by Asp267 and Asn415.

This sequence belongs to the malic enzymes family. In terms of assembly, homotetramer. Mg(2+) serves as cofactor. It depends on Mn(2+) as a cofactor.

The enzyme catalyses (S)-malate + NAD(+) = pyruvate + CO2 + NADH. The catalysed reaction is oxaloacetate + H(+) = pyruvate + CO2. The chain is NAD-dependent malic enzyme from Shewanella baltica (strain OS155 / ATCC BAA-1091).